The primary structure comprises 142 residues: Large ribosomal subunit protein uL11 (142 aa).

Part of the ribosomal stalk of the 50S ribosomal subunit. Interacts with L10 and the large rRNA to form the base of the stalk. L10 forms an elongated spine to which L12 dimers bind in a sequential fashion forming a multimeric L10(L12)X complex. In terms of processing, lys-40 is trimethylated or acetylated; other modifications may also exist.

Functionally, forms part of the ribosomal stalk which helps the ribosome interact with GTP-bound translation factors. This is Large ribosomal subunit protein uL11 from Rhodopseudomonas palustris (strain ATCC BAA-98 / CGA009).